Here is an 85-residue protein sequence, read N- to C-terminus: Arminin 524 (85 aa).

The signal sequence occupies residues 1-18 (MKAVFAILFLAFIALTYA). Residues 19–57 (KSYDEVKEEIKNEVEREIFEDLEEESDELDNDVEEFNDA) constitute a propeptide that is removed on maturation. Position 82 is an alanine amide (A82).

It belongs to the arminin family. Expressed in entodermal epithelium along the body column.

Its subcellular location is the secreted. The protein localises to the target cell membrane. Its function is as follows. Antimicrobial peptide with a broad-spectrum antimicrobial activity. Keeps its antibacterial activity under a wide range of salt concentrations that mimic physiological conditions of human blood, which is surprising, since Hydra is an obligate freshwater animal with nearly no salt tolerance. Does not affect red blood cells. The polypeptide is Arminin 524 (Hydra oligactis (Brown hydra)).